The sequence spans 267 residues: Acetyl-coenzyme A carboxylase carboxyl transferase subunit beta 1 (267 aa).

The CoA carboxyltransferase N-terminal domain maps to 9–267; the sequence is TWQACPKCGR…NYGIGRSAHG (259 aa). Residues cysteine 13, cysteine 16, cysteine 31, and cysteine 34 each coordinate Zn(2+). Residues 13 to 34 form a C4-type zinc finger; that stretch reads CPKCGRHVHQRQWGTYQQCPYC.

This sequence belongs to the AccD/PCCB family. Acetyl-CoA carboxylase is a heterohexamer composed of biotin carboxyl carrier protein (AccB), biotin carboxylase (AccC) and two subunits each of ACCase subunit alpha (AccA) and ACCase subunit beta (AccD). Requires Zn(2+) as cofactor.

The protein localises to the cytoplasm. The enzyme catalyses N(6)-carboxybiotinyl-L-lysyl-[protein] + acetyl-CoA = N(6)-biotinyl-L-lysyl-[protein] + malonyl-CoA. It functions in the pathway lipid metabolism; malonyl-CoA biosynthesis; malonyl-CoA from acetyl-CoA: step 1/1. Functionally, component of the acetyl coenzyme A carboxylase (ACC) complex. Biotin carboxylase (BC) catalyzes the carboxylation of biotin on its carrier protein (BCCP) and then the CO(2) group is transferred by the transcarboxylase to acetyl-CoA to form malonyl-CoA. This is Acetyl-coenzyme A carboxylase carboxyl transferase subunit beta 1 from Lactiplantibacillus plantarum (strain JDM1) (Lactobacillus plantarum).